Reading from the N-terminus, the 317-residue chain is tRNA dimethylallyltransferase (317 aa).

14-21 is a binding site for ATP; that stretch reads GPTAVGKT. 16–21 provides a ligand contact to substrate; it reads TAVGKT. The segment at 39–42 is interaction with substrate tRNA; that stretch reads DSMQ.

The protein belongs to the IPP transferase family. Monomer. The cofactor is Mg(2+).

It catalyses the reaction adenosine(37) in tRNA + dimethylallyl diphosphate = N(6)-dimethylallyladenosine(37) in tRNA + diphosphate. In terms of biological role, catalyzes the transfer of a dimethylallyl group onto the adenine at position 37 in tRNAs that read codons beginning with uridine, leading to the formation of N6-(dimethylallyl)adenosine (i(6)A). The sequence is that of tRNA dimethylallyltransferase from Bacillus cereus (strain Q1).